The sequence spans 420 residues: Phosphoglycerate kinase, cytosolic (420 aa).

12 residues coordinate (2R)-3-phosphoglycerate: Val-23, Asp-24, Phe-25, Asn-26, Arg-39, Ser-61, His-62, Gly-64, Arg-65, Arg-135, His-171, and Arg-172. Positions 217 and 218 each coordinate ADP. Gly-217 lines the CDP pocket. Ala-218 and Lys-219 together coordinate AMP. Ala-218 provides a ligand contact to ATP. A Mg(2+)-binding site is contributed by Ala-218. Lys-219 contacts (2R)-3-phosphoglycerate. Asp-222 provides a ligand contact to CDP. Asp-222 lines the Mg(2+) pocket. ADP contacts are provided by Lys-223 and Gly-241. Lys-223 lines the AMP pocket. Lys-223 is a binding site for ATP. Gly-241 serves as a coordination point for CDP. Residues Ala-242 and Ala-314 each contribute to the AMP site. Positions 242 and 314 each coordinate ATP. ADP is bound by residues Ala-314 and Asn-338. Residues Gly-339 and Phe-344 each coordinate CDP. Residues Phe-344, Glu-345, Glu-377, and Ser-378 each contribute to the ADP site. Residue Glu-345 coordinates AMP. ATP is bound by residues Glu-345, Glu-377, and Ser-378. Glu-377 lines the Mg(2+) pocket.

Belongs to the phosphoglycerate kinase family. As to quaternary structure, monomer. Requires Mg(2+) as cofactor.

It is found in the cytoplasm. The enzyme catalyses (2R)-3-phosphoglycerate + ATP = (2R)-3-phospho-glyceroyl phosphate + ADP. It functions in the pathway carbohydrate degradation; glycolysis; pyruvate from D-glyceraldehyde 3-phosphate: step 2/5. The polypeptide is Phosphoglycerate kinase, cytosolic (Trypanosoma brucei brucei).